The following is a 291-amino-acid chain: Proteasomal ubiquitin receptor ADRM1 homolog rpn1301 (291 aa).

A Pru domain is found at 1–114; that stretch reads MSLITFKAGK…ERINSYIKDQ (114 aa). A disordered region spans residues 135–162; it reads TVEQSEPIAQPTESSKESSEIGAPNSDE. In terms of domain architecture, DEUBAD spans 178–290; the sequence is AQAGFGGSTV…ARFVSRNNGS (113 aa).

This sequence belongs to the ADRM1 family. Component of the 19S proteasome regulatory particle complex. The 2 S.pombe rpn13 homologs, rpn1301 and rpn1302 are present at a 0.2-1 ratio.

Its subcellular location is the cytoplasm. It is found in the nucleus. Its function is as follows. Component of the 26S proteasome, a multiprotein complex involved in the ATP-dependent degradation of ubiquitinated proteins. This complex plays a key role in the maintenance of protein homeostasis by removing misfolded or damaged proteins, which could impair cellular functions, and by removing proteins whose functions are no longer required. Therefore, the proteasome participates in numerous cellular processes, including cell cycle progression, apoptosis, or DNA damage repair. Within the complex, functions as a proteasomal ubiquitin receptor. The chain is Proteasomal ubiquitin receptor ADRM1 homolog rpn1301 (rpn1301) from Schizosaccharomyces pombe (strain 972 / ATCC 24843) (Fission yeast).